The following is a 204-amino-acid chain: Recombination protein RecR (204 aa).

The C4-type zinc-finger motif lies at Cys-58–Cys-75. Residues Thr-83–Pro-181 form the Toprim domain.

The protein belongs to the RecR family.

Functionally, may play a role in DNA repair. It seems to be involved in an RecBC-independent recombinational process of DNA repair. It may act with RecF and RecO. This is Recombination protein RecR from Chlorobium chlorochromatii (strain CaD3).